The sequence spans 705 residues: MNPLRSIQHNIATPPISGGQPLDAVGPQAQQSHPKRISPSQLSQSAHQALERLSANAEHQRLASLVRNALQDGTFQFQSSNHTQVTYKASICLPADTDTVRTDHLINNELTVQARLNDQSEYDIVSAHLHGSSKAISFDVPSPPPAHGSASSVLSERTHLGMSRVLSQDAVDSSSLETPLLSSPDHSRPPSQPKPVHIGSVRRDSGSLVSDNPVVQALLSFAQADQAFPPQAASIAGVQLEMRPRRDIEKALEEFKGAFTVVKAQLMSGANSSERVDEDVNADIHIPLLLKAIERGAAAFGPNASIGQNSAKAFLASCAPKITSNDDVLSEFINQKLKGDDDLQVRLGAQELLHVATKKEFQLGGLAGSIGVSSILGSAWELGASELLKNAIFGKNFSPSQYALQLAGIDSVPPLIIESMDTMCVLAIIKGMKGEEWSMSDLLPKALKAGAISSVVSFPNNVLQYAGFKSRVGDLAANSVTTEAAIFGAASGIPPEVKESEELMRAGLFQSMKDGVMAHSGEGVDTKKTIERMTRHALDIAPGESTAVKSMGLASIVGMIPLIASNKATGLLSEQVLRIFRSAVFNPIEAIALNALALGGRVNVPGLFDSDNAKHARVVQTILARASQHMEAGDRDISAEELHQMLAPRSEFLRHVGSAIVNGMNASFEAIPALVRKLGYGEAPLAERIPYQDLAVPDTSRQPAP.

2 stretches are compositionally biased toward polar residues: residues 1 to 11 (MNPLRSIQHNI) and 28 to 41 (QAQQSHPKRISPSQ). Disordered stretches follow at residues 1-41 (MNPL…SPSQ) and 173-207 (SSSLETPLLSSPDHSRPPSQPKPVHIGSVRRDSGS). Positions 173 to 184 (SSSLETPLLSSP) are enriched in low complexity.

Its subcellular location is the secreted. Functionally, effector protein involved in non-host recognition. The chain is Effector protein hopD1 (hopD1) from Pseudomonas syringae pv. tomato (strain ATCC BAA-871 / DC3000).